A 343-amino-acid polypeptide reads, in one-letter code: CRISPR-associated endonuclease Cas1 1 (343 aa).

Mn(2+)-binding residues include glutamate 166, histidine 234, and glutamate 249.

This sequence belongs to the CRISPR-associated endonuclease Cas1 family. In terms of assembly, homodimer, forms a heterotetramer with a Cas2 homodimer. Mg(2+) serves as cofactor. The cofactor is Mn(2+).

CRISPR (clustered regularly interspaced short palindromic repeat), is an adaptive immune system that provides protection against mobile genetic elements (viruses, transposable elements and conjugative plasmids). CRISPR clusters contain spacers, sequences complementary to antecedent mobile elements, and target invading nucleic acids. CRISPR clusters are transcribed and processed into CRISPR RNA (crRNA). Acts as a dsDNA endonuclease. Involved in the integration of spacer DNA into the CRISPR cassette. This chain is CRISPR-associated endonuclease Cas1 1, found in Moorella thermoacetica (strain ATCC 39073 / JCM 9320).